The primary structure comprises 467 residues: UDP-N-acetylmuramate--L-alanine ligase (467 aa).

114–120 (GTHGKTT) contacts ATP.

This sequence belongs to the MurCDEF family.

Its subcellular location is the cytoplasm. The catalysed reaction is UDP-N-acetyl-alpha-D-muramate + L-alanine + ATP = UDP-N-acetyl-alpha-D-muramoyl-L-alanine + ADP + phosphate + H(+). It functions in the pathway cell wall biogenesis; peptidoglycan biosynthesis. Functionally, cell wall formation. The chain is UDP-N-acetylmuramate--L-alanine ligase from Rhodopseudomonas palustris (strain BisB18).